A 993-amino-acid polypeptide reads, in one-letter code: Mediator of RNA polymerase II transcription subunit 24 (993 aa).

A phosphoserine mark is found at S827 and S829.

Belongs to the Mediator complex subunit 24 family. Component of the Mediator complex, which includes at least CDK8, MED4, MED6, MED11, MED14, MED17, MED18, MED20, MED21, MED22, MED27, MED28, MED30 and MED31.

The protein resides in the nucleus. In terms of biological role, component of the Mediator complex, a coactivator involved in the regulated transcription of nearly all RNA polymerase II-dependent genes. Mediator functions as a bridge to convey information from gene-specific regulatory proteins to the basal RNA polymerase II transcription machinery. Mediator is recruited to promoters by direct interactions with regulatory proteins and serves as a scaffold for the assembly of a functional preinitiation complex with RNA polymerase II and the general transcription factors. Required for activated transcription of the MtnA, MtnB and MtnD genes. The chain is Mediator of RNA polymerase II transcription subunit 24 (MED24) from Drosophila melanogaster (Fruit fly).